A 21-amino-acid polypeptide reads, in one-letter code: Glutathione S-transferase 1 (21 aa).

It belongs to the GST superfamily. Phi family.

It carries out the reaction RX + glutathione = an S-substituted glutathione + a halide anion + H(+). Its function is as follows. Conjugation of reduced glutathione to a wide number of exogenous and endogenous hydrophobic electrophiles. In plants, may have a detoxification role against certain herbicides. In Populus euphratica (Euphrates poplar), this protein is Glutathione S-transferase 1.